The primary structure comprises 329 residues: GTP 3',8-cyclase (329 aa).

A Radical SAM core domain is found at 8–234 (AFARKFYYLR…QLRQRSDGPA (227 aa)). Arginine 17 lines the GTP pocket. 2 residues coordinate [4Fe-4S] cluster: cysteine 24 and cysteine 28. Tyrosine 30 provides a ligand contact to S-adenosyl-L-methionine. Cysteine 31 lines the [4Fe-4S] cluster pocket. Arginine 68 contacts GTP. Glycine 72 is a binding site for S-adenosyl-L-methionine. A GTP-binding site is contributed by threonine 99. Residue serine 123 participates in S-adenosyl-L-methionine binding. GTP is bound at residue lysine 160. Methionine 194 is a binding site for S-adenosyl-L-methionine. Positions 257 and 260 each coordinate [4Fe-4S] cluster. Position 262–264 (262–264 (RLR)) interacts with GTP. Cysteine 274 serves as a coordination point for [4Fe-4S] cluster.

Belongs to the radical SAM superfamily. MoaA family. As to quaternary structure, monomer and homodimer. Requires [4Fe-4S] cluster as cofactor.

The catalysed reaction is GTP + AH2 + S-adenosyl-L-methionine = (8S)-3',8-cyclo-7,8-dihydroguanosine 5'-triphosphate + 5'-deoxyadenosine + L-methionine + A + H(+). It participates in cofactor biosynthesis; molybdopterin biosynthesis. Catalyzes the cyclization of GTP to (8S)-3',8-cyclo-7,8-dihydroguanosine 5'-triphosphate. The polypeptide is GTP 3',8-cyclase (Shigella dysenteriae serotype 1 (strain Sd197)).